Here is a 183-residue protein sequence, read N- to C-terminus: UPF0397 protein stu0306/stu0307 (183 aa).

A run of 5 helical transmembrane segments spans residues A11 to F31, V44 to G64, G74 to F94, I111 to I131, and F149 to I169.

This sequence belongs to the UPF0397 family.

The protein localises to the cell membrane. This Streptococcus thermophilus (strain ATCC BAA-250 / LMG 18311) protein is UPF0397 protein stu0306/stu0307.